The chain runs to 236 residues: Protein YIPF6 (236 aa).

Ala2 is modified (N-acetylalanine). Over 2-84 (AEAEESPGDP…HVLYPRKSNT (83 aa)) the chain is Cytoplasmic. A Phosphoserine modification is found at Ser7. Residues 85–105 (LLRDWDLWGPLILCVTLALML) traverse the membrane as a helical segment. At 106–115 (QRDSADSEKD) the chain is on the lumenal side. A helical transmembrane segment spans residues 116 to 136 (GGPQFAEVFVIVWFGAVTITL). The Cytoplasmic portion of the chain corresponds to 137-146 (NSKLLGGNIS). A helical transmembrane segment spans residues 147–167 (FFQSLCVLGYCILPLTVAMLI). The Lumenal portion of the chain corresponds to 168–184 (CRLVLLADPGPVNFMVR). Residues 185–205 (LFVVIVMFAWSIVASTAFLAD) form a helical membrane-spanning segment. Over 206–212 (SQPPNRR) the chain is Cytoplasmic. A helical membrane pass occupies residues 213 to 233 (ALAVYPVFLFYFVISWMILTF). Topologically, residues 234–236 (TPQ) are lumenal.

Belongs to the YIP1 family. In terms of assembly, predominantly interacts with YIPF1 or YIPF2, but may also form a ternary complex with YIPF1 and YIPF2. This interaction may stabilize YIPF1 and YIPF2.

Its subcellular location is the golgi apparatus membrane. Its function is as follows. May be required for stable YIPF1 and YIPF2 protein expression. The protein is Protein YIPF6 (YIPF6) of Homo sapiens (Human).